The following is a 222-amino-acid chain: Methionine import system permease protein MetP (222 aa).

Residues 18-212 (TYETLYMTLI…IIVFIIQIIG (195 aa)) enclose the ABC transmembrane type-1 domain. A run of 5 helical transmembrane segments spans residues 25-45 (TLISLLFAFVIGVILGLLLFL), 73-93 (FLILIILLLGFTKFLVGTILG), 97-117 (ALPALVIGSAPFYARLVEIAL), 152-172 (ISGITVTAIALIGSTAIAGAI), and 195-215 (FVATVFILIIVFIIQIIGDLI).

The protein belongs to the binding-protein-dependent transport system permease family. CysTW subfamily. The complex is composed of two ATP-binding proteins (MetN), two transmembrane proteins (MetP) and a solute-binding protein (MetQ).

The protein resides in the cell membrane. Part of the ABC transporter complex MetNPQ involved in methionine import. Responsible for the translocation of the substrate across the membrane. It has also been shown to be involved in methionine sulfoxide transport. The sequence is that of Methionine import system permease protein MetP (metP) from Bacillus subtilis (strain 168).